A 433-amino-acid chain; its full sequence is Cyclin-dependent kinase 15 (433 aa).

Positions 46–83 (ASSSTASFHPRGLEAASAQKLKSKRPRSNSDSFQEENL) are disordered. One can recognise a Protein kinase domain in the interval 52–336 (SFHPRGLEAA…SKLPNYNPEW (285 aa)). ATP-binding positions include 58–66 (LEAASAQKL) and glutamate 81. The active-site Proton acceptor is threonine 173.

Belongs to the protein kinase superfamily. CMGC Ser/Thr protein kinase family. CDC2/CDKX subfamily. Requires Mg(2+) as cofactor.

It carries out the reaction L-seryl-[protein] + ATP = O-phospho-L-seryl-[protein] + ADP + H(+). The enzyme catalyses L-threonyl-[protein] + ATP = O-phospho-L-threonyl-[protein] + ADP + H(+). Serine/threonine-protein kinase that acts like an antiapoptotic protein that counters TRAIL/TNFSF10-induced apoptosis by inducing phosphorylation of BIRC5 at 'Thr-34'. The sequence is that of Cyclin-dependent kinase 15 (Cdk15) from Mus musculus (Mouse).